The primary structure comprises 349 residues: Adenosine deaminase (349 aa).

Zn(2+) is bound by residues His25 and His27. Substrate-binding residues include His27, Asp29, and Gly182. Position 209 (His209) interacts with Zn(2+). The Proton donor role is filled by Glu212. Residue Asp289 coordinates Zn(2+).

The protein belongs to the metallo-dependent hydrolases superfamily. Adenosine and AMP deaminases family. Adenosine deaminase subfamily. Zn(2+) is required as a cofactor.

It catalyses the reaction adenosine + H2O + H(+) = inosine + NH4(+). The enzyme catalyses 2'-deoxyadenosine + H2O + H(+) = 2'-deoxyinosine + NH4(+). Functionally, catalyzes the hydrolytic deamination of adenosine and 2-deoxyadenosine. The polypeptide is Adenosine deaminase (Streptococcus mutans serotype c (strain ATCC 700610 / UA159)).